The chain runs to 403 residues: Probable tRNA sulfurtransferase (403 aa).

A THUMP domain is found at 60-165 (QLVEERLKPI…KEGVFLSCRT (106 aa)). ATP-binding positions include 183–184 (ML), 208–209 (HF), Arg265, Gly287, and Gln296.

It belongs to the ThiI family.

It is found in the cytoplasm. The enzyme catalyses [ThiI sulfur-carrier protein]-S-sulfanyl-L-cysteine + a uridine in tRNA + 2 reduced [2Fe-2S]-[ferredoxin] + ATP + H(+) = [ThiI sulfur-carrier protein]-L-cysteine + a 4-thiouridine in tRNA + 2 oxidized [2Fe-2S]-[ferredoxin] + AMP + diphosphate. It carries out the reaction [ThiS sulfur-carrier protein]-C-terminal Gly-Gly-AMP + S-sulfanyl-L-cysteinyl-[cysteine desulfurase] + AH2 = [ThiS sulfur-carrier protein]-C-terminal-Gly-aminoethanethioate + L-cysteinyl-[cysteine desulfurase] + A + AMP + 2 H(+). It participates in cofactor biosynthesis; thiamine diphosphate biosynthesis. In terms of biological role, catalyzes the ATP-dependent transfer of a sulfur to tRNA to produce 4-thiouridine in position 8 of tRNAs, which functions as a near-UV photosensor. Also catalyzes the transfer of sulfur to the sulfur carrier protein ThiS, forming ThiS-thiocarboxylate. This is a step in the synthesis of thiazole, in the thiamine biosynthesis pathway. The sulfur is donated as persulfide by IscS. This chain is Probable tRNA sulfurtransferase, found in Listeria monocytogenes serotype 4b (strain CLIP80459).